The following is a 230-amino-acid chain: Inactive 2-(S)-hydroxypropyl-CoM dehydrogenase 2 (230 aa).

This sequence belongs to the short-chain dehydrogenases/reductases (SDR) family.

This chain is Inactive 2-(S)-hydroxypropyl-CoM dehydrogenase 2, found in Xanthobacter autotrophicus (strain ATCC BAA-1158 / Py2).